The primary structure comprises 156 residues: uncharacterized protein (156 aa).

The next 3 membrane-spanning stretches (helical) occupy residues leucine 42–valine 59, alanine 79–tyrosine 98, and serine 105–isoleucine 127.

The protein localises to the cell membrane. This is an uncharacterized protein from Archaeoglobus fulgidus (strain ATCC 49558 / DSM 4304 / JCM 9628 / NBRC 100126 / VC-16).